Consider the following 420-residue polypeptide: UDP-N-acetylglucosamine 1-carboxyvinyltransferase (420 aa).

22–23 (KN) contacts phosphoenolpyruvate. Position 91 (R91) interacts with UDP-N-acetyl-alpha-D-glucosamine. The Proton donor role is filled by C115. C115 is modified (2-(S-cysteinyl)pyruvic acid O-phosphothioketal). Residues 120 to 124 (RPVDL), 160 to 163 (KVSV), D305, and I327 each bind UDP-N-acetyl-alpha-D-glucosamine.

This sequence belongs to the EPSP synthase family. MurA subfamily.

It is found in the cytoplasm. It carries out the reaction phosphoenolpyruvate + UDP-N-acetyl-alpha-D-glucosamine = UDP-N-acetyl-3-O-(1-carboxyvinyl)-alpha-D-glucosamine + phosphate. Its pathway is cell wall biogenesis; peptidoglycan biosynthesis. Functionally, cell wall formation. Adds enolpyruvyl to UDP-N-acetylglucosamine. This Pectobacterium carotovorum subsp. carotovorum (strain PC1) protein is UDP-N-acetylglucosamine 1-carboxyvinyltransferase.